The primary structure comprises 112 residues: Large ribosomal subunit protein P2 (112 aa).

The segment covering 69–85 (AGGAAMPAAAAGGAPAA) has biased composition (low complexity). Residues 69–112 (AGGAAMPAAAAGGAPAAAEDKAEAKKPEAEPEEEEDDMGFSLFD) are disordered. Positions 86–97 (AEDKAEAKKPEA) are enriched in basic and acidic residues.

It belongs to the eukaryotic ribosomal protein P1/P2 family. In terms of assembly, P1 and P2 exist as dimers at the large ribosomal subunit. In terms of processing, phosphorylated.

In terms of biological role, plays an important role in the elongation step of protein synthesis. This Babesia bovis protein is Large ribosomal subunit protein P2.